Reading from the N-terminus, the 93-residue chain is Large ribosomal subunit protein uL23 (93 aa).

The protein belongs to the universal ribosomal protein uL23 family. As to quaternary structure, part of the 50S ribosomal subunit. Contacts protein L29, and trigger factor when it is bound to the ribosome.

In terms of biological role, one of the early assembly proteins it binds 23S rRNA. One of the proteins that surrounds the polypeptide exit tunnel on the outside of the ribosome. Forms the main docking site for trigger factor binding to the ribosome. This is Large ribosomal subunit protein uL23 from Helicobacter acinonychis (strain Sheeba).